A 383-amino-acid polypeptide reads, in one-letter code: Galactokinase (383 aa).

A substrate-binding site is contributed by 34–37 (EHTD). 124–130 (GAGLSSS) provides a ligand contact to ATP. Mg(2+)-binding residues include serine 130 and glutamate 162. Aspartate 174 functions as the Proton acceptor in the catalytic mechanism. Residue tyrosine 223 coordinates substrate.

This sequence belongs to the GHMP kinase family. GalK subfamily.

The protein localises to the cytoplasm. The catalysed reaction is alpha-D-galactose + ATP = alpha-D-galactose 1-phosphate + ADP + H(+). Its pathway is carbohydrate metabolism; galactose metabolism. Its function is as follows. Catalyzes the transfer of the gamma-phosphate of ATP to D-galactose to form alpha-D-galactose-1-phosphate (Gal-1-P). In Yersinia pseudotuberculosis serotype O:1b (strain IP 31758), this protein is Galactokinase.